Reading from the N-terminus, the 143-residue chain is Large ribosomal subunit protein uL11 (143 aa).

It belongs to the universal ribosomal protein uL11 family. In terms of assembly, part of the ribosomal stalk of the 50S ribosomal subunit. Interacts with L10 and the large rRNA to form the base of the stalk. L10 forms an elongated spine to which L12 dimers bind in a sequential fashion forming a multimeric L10(L12)X complex. Post-translationally, one or more lysine residues are methylated.

Its function is as follows. Forms part of the ribosomal stalk which helps the ribosome interact with GTP-bound translation factors. This chain is Large ribosomal subunit protein uL11, found in Variovorax paradoxus (strain S110).